The following is a 297-amino-acid chain: Glucose-6-phosphate 1-epimerase (297 aa).

3 residues coordinate substrate: R57, Q81, and R86. Position 88 is a phosphoserine (S88). Residue H159 is part of the active site. Substrate is bound at residue D203. Residue E264 is part of the active site.

Belongs to the glucose-6-phosphate 1-epimerase family.

It catalyses the reaction alpha-D-glucose 6-phosphate = beta-D-glucose 6-phosphate. In terms of biological role, catalyzes the interconversion between the alpha and beta anomers from at least three hexose 6-phosphate sugars (Glc6P, Gal6P, and Man6P). The polypeptide is Glucose-6-phosphate 1-epimerase (Saccharomyces cerevisiae (strain ATCC 204508 / S288c) (Baker's yeast)).